We begin with the raw amino-acid sequence, 1226 residues long: Integrin alpha pat-2 (1226 aa).

The N-terminal stretch at Met1–Thr25 is a signal peptide. The Extracellular portion of the chain corresponds to Phe26–Pro1154. 7 FG-GAP repeats span residues Asn27 to Glu94, Asn108 to Glu171, Glu178 to Pro233, Asn234 to Asn290, Leu291 to Tyr345, Gly362 to Glu421, and Gln425 to Ala488. N-linked (GlcNAc...) asparagine glycans are attached at residues Asn108, Asn228, and Asn290. Asn608 carries an N-linked (GlcNAc...) asparagine glycan. Residues Arg620–Asp622 carry the Cell attachment site motif. Asn679 carries an N-linked (GlcNAc...) asparagine glycan. A disordered region spans residues Ser709–Lys733. 2 N-linked (GlcNAc...) asparagine glycosylation sites follow: Asn775 and Asn819. Disordered stretches follow at residues Leu898–Glu958 and Asp982–Ser1040. Acidic residues predominate over residues Arg920–Thr931. Positions Thr932–Ser951 are enriched in low complexity. The span at Tyr985–Phe1005 shows a compositional bias: acidic residues. Basic residues predominate over residues Ser1010–Gly1026. Residues Glu1027 to Ser1040 show a composition bias toward basic and acidic residues. Residues Trp1155–Trp1177 form a helical membrane-spanning segment. Residues Arg1178–Leu1226 are Cytoplasmic-facing. The tract at residues His1191–Leu1226 is disordered. Over residues Pro1200–Leu1226 the composition is skewed to polar residues.

The protein belongs to the integrin alpha chain family. Heterodimer of an alpha and a beta subunit. Interacts with beta subunit pat-3. Interacts with dep-1. Component of an integrin containing attachment complex, composed of at least pat-2, pat-3, pat-4, pat-6, unc-52, unc-97 and unc-112. Expressed in body-wall muscle cells, distal tip cells, and vulval tissue.

The protein resides in the membrane. Required for muscle development probably through the regulation of the actin-myosin cytoskeleton. Component of an integrin containing attachment complex, which is required for muscle maintenance. During the formation of neuromuscular junctions at the larval stage, negatively regulates membrane protrusion from body wall muscles, probably through lamins such as epi-1, lam-2 and unc-52. Required for distal tip cell migration and dorsal pathfinding. Required for egg-laying. May play a role in cell motility and cell-cell interactions. Plays a role in vulval development. Probably within the alpha pat-2/beta pat-3 integrin receptor complex, plays a role in the negative regulation of let-23 signaling and vulval induction. This is probably partly by restricting the mobility of the let-23 receptor on the plasma membrane of vulval cells which thereby attenuates let-23 signaling. The polypeptide is Integrin alpha pat-2 (Caenorhabditis elegans).